We begin with the raw amino-acid sequence, 555 residues long: 1,3-beta-glucanosyltransferase GAS2 (555 aa).

A signal peptide spans 1 to 24 (MNKKQNFYAAIIVAIFLCLQLSHG). Residues Cys-89 and Cys-118 are joined by a disulfide bond. Residues Tyr-107, 134 to 142 (SEPDISINR), Asn-175, Glu-176, Asp-217, and Arg-222 contribute to the (1,3-beta-D-glucosyl)n site. Glu-176 acts as the Proton donor in catalysis. Intrachain disulfides connect Cys-231–Cys-367, Cys-247–Cys-278, Cys-390–Cys-442, Cys-392–Cys-489, Cys-399–Cys-466, and Cys-419–Cys-424. Catalysis depends on Glu-275, which acts as the Nucleophile. Residue Tyr-307 coordinates (1,3-beta-D-glucosyl)n. A glycan (N-linked (GlcNAc...) asparagine) is linked at Asn-498. Residue Asp-531 is the site of GPI-anchor amidated aspartate attachment. Positions 532–555 (GTIAFKTSGFVILLISMIAAGILL) are cleaved as a propeptide — removed in mature form.

The protein belongs to the glycosyl hydrolase 72 family. In terms of processing, N-glycosylated.

The protein localises to the cell membrane. Its function is as follows. Splits internally a 1,3-beta-glucan molecule and transfers the newly generated reducing end (the donor) to the non-reducing end of another 1,3-beta-glucan molecule (the acceptor) forming a 1,3-beta linkage, resulting in the elongation of 1,3-beta-glucan chains in the cell wall. Involved in spore wall assembly. This chain is 1,3-beta-glucanosyltransferase GAS2 (GAS2), found in Saccharomyces cerevisiae (strain ATCC 204508 / S288c) (Baker's yeast).